The primary structure comprises 333 residues: Bacteriocin helveticin-J (333 aa).

This heat-sensitive bacteriocin inhibits the growth of closely related Lactobacillus species. In Lactobacillus helveticus (Lactobacillus suntoryeus), this protein is Bacteriocin helveticin-J (hlv).